Consider the following 78-residue polypeptide: Large ribosomal subunit protein bL28 (78 aa).

This sequence belongs to the bacterial ribosomal protein bL28 family.

This chain is Large ribosomal subunit protein bL28, found in Flavobacterium johnsoniae (strain ATCC 17061 / DSM 2064 / JCM 8514 / BCRC 14874 / CCUG 350202 / NBRC 14942 / NCIMB 11054 / UW101) (Cytophaga johnsonae).